Consider the following 321-residue polypeptide: Olfactory receptor 52P1 (321 aa).

The Extracellular portion of the chain corresponds to 1-27 (MESPNHTDVDPSVFFLLGIPGLEQFHL). N-linked (GlcNAc...) asparagine glycosylation occurs at Asn5. Residues 28–48 (WLSLPVCGLGTATIVGNITIL) traverse the membrane as a helical segment. Topologically, residues 49–56 (VVVATEPV) are cytoplasmic. Residues 57–77 (LHKPVYLFLCMLSTIDLAASV) traverse the membrane as a helical segment. The Extracellular segment spans residues 78–101 (STVPKLLAIFWCGAGHISASACLA). Cys99 and Cys191 are joined by a disulfide. A helical membrane pass occupies residues 102–122 (QMFFIHAFCMMESTVLLAMAF). Topologically, residues 123-141 (DRYVAICHPLRYATILTDT) are cytoplasmic. Residues 142–162 (IIAHIGVAAVVRGSLLMLPCP) form a helical membrane-spanning segment. The Extracellular segment spans residues 163-198 (FLIGRLNFCQSHVILHTYCEHMAVVKLACGDTRPNR). The helical transmembrane segment at 199–219 (VYGLTAALLVIGVDLFCIGLS) threads the bilayer. The Cytoplasmic portion of the chain corresponds to 220 to 239 (YALSAQAVLRLSSHEARSKA). The helical transmembrane segment at 240–260 (LGTCGSHVCVILISYTPALFS) threads the bilayer. Residues 261–275 (FFTHRFGHHVPVHIH) lie on the Extracellular side of the membrane. The chain crosses the membrane as a helical span at residues 276–296 (ILLANVYLLLPPALNPVVYGV). Residues 297–315 (KTKQIRKRVVRVFQSGQGM) are Cytoplasmic-facing.

It belongs to the G-protein coupled receptor 1 family.

The protein resides in the cell membrane. Odorant receptor. This chain is Olfactory receptor 52P1, found in Homo sapiens (Human).